The primary structure comprises 179 residues: Large ribosomal subunit protein uL6 (179 aa).

Belongs to the universal ribosomal protein uL6 family. As to quaternary structure, part of the 50S ribosomal subunit.

Its function is as follows. This protein binds to the 23S rRNA, and is important in its secondary structure. It is located near the subunit interface in the base of the L7/L12 stalk, and near the tRNA binding site of the peptidyltransferase center. The sequence is that of Large ribosomal subunit protein uL6 from Bacillus anthracis.